Reading from the N-terminus, the 67-residue chain is Large ribosomal subunit protein uL29 (67 aa).

This sequence belongs to the universal ribosomal protein uL29 family.

In Sorangium cellulosum (strain So ce56) (Polyangium cellulosum (strain So ce56)), this protein is Large ribosomal subunit protein uL29.